We begin with the raw amino-acid sequence, 404 residues long: S-adenosylmethionine synthase (404 aa).

Position 16 (His16) interacts with ATP. Asp18 is a Mg(2+) binding site. Glu44 is a K(+) binding site. Residues Glu57 and Gln100 each coordinate L-methionine. The tract at residues 100 to 110 (QSPEINQGVAR) is flexible loop. ATP-binding positions include 177-179 (DGK), Asp257, 263-264 (RK), Ala280, and Lys284. Asp257 lines the L-methionine pocket. Lys288 contributes to the L-methionine binding site.

The protein belongs to the AdoMet synthase family. Homotetramer; dimer of dimers. Mg(2+) is required as a cofactor. K(+) serves as cofactor.

The protein localises to the cytoplasm. The catalysed reaction is L-methionine + ATP + H2O = S-adenosyl-L-methionine + phosphate + diphosphate. It participates in amino-acid biosynthesis; S-adenosyl-L-methionine biosynthesis; S-adenosyl-L-methionine from L-methionine: step 1/1. Catalyzes the formation of S-adenosylmethionine (AdoMet) from methionine and ATP. The overall synthetic reaction is composed of two sequential steps, AdoMet formation and the subsequent tripolyphosphate hydrolysis which occurs prior to release of AdoMet from the enzyme. This is S-adenosylmethionine synthase from Bifidobacterium adolescentis (strain ATCC 15703 / DSM 20083 / NCTC 11814 / E194a).